Consider the following 365-residue polypeptide: N-acetylgalactosamine-N,N'-diacetylbacillosaminyl-diphospho-undecaprenol 4-alpha-N-acetylgalactosaminyltransferase (365 aa).

Belongs to the glycosyltransferase group 1 family.

The protein resides in the cell inner membrane. The catalysed reaction is N-acetyl-alpha-D-galactosaminyl-(1-&gt;3)-N,N'-diacetyl-alpha-D-bacillosaminyl-tri-trans,hepta-cis-undecaprenyl diphosphate + UDP-N-acetyl-alpha-D-galactosamine = N-acetyl-alpha-D-galactosaminyl-(1-&gt;4)-N-acetyl-alpha-D-galactosaminyl-(1-&gt;3)-N,N'-diacetyl-alpha-D-bacillosaminyl-tri-trans,heptacis-undecaprenyl diphosphate + UDP + H(+). It functions in the pathway protein modification; protein glycosylation. Its function is as follows. Adds a GalNAc residue on to the Und-PP-Bac2,4diNAc-GalNAc disaccharide in the N-linked protein glycosylation pathway. Transfers the third sugar in the heptasaccharide biosynthesis. In Campylobacter jejuni subsp. jejuni serotype O:2 (strain ATCC 700819 / NCTC 11168), this protein is N-acetylgalactosamine-N,N'-diacetylbacillosaminyl-diphospho-undecaprenol 4-alpha-N-acetylgalactosaminyltransferase (pglJ).